Here is a 32-residue protein sequence, read N- to C-terminus: Islet amyloid polypeptide (32 aa).

It belongs to the calcitonin family. As to quaternary structure, can form homodimers. Interacts with IDE and INS. Interaction with INS inhibits homodimerization and fibril formation.

The protein resides in the secreted. Its function is as follows. Amylin/IAPP is a glucoregulatory peptide hormone that plays an important role in the regulation of energy homeostasis. Selectively inhibits insulin-stimulated glucose utilization and glycogen deposition in muscle, while not affecting adipocyte glucose metabolism. IAPP function is mediated by the CALCR-RAMPs (AMYRs) receptor complexes. Amylin can also bind CALCR receptor in the absence of RAMPs, although it is more selective for AMYRs. In Saguinus oedipus (Cotton-top tamarin), this protein is Islet amyloid polypeptide (IAPP).